Here is a 567-residue protein sequence, read N- to C-terminus: Urease subunit alpha (567 aa).

The region spanning 128–567 is the Urease domain; that stretch reads GGIDPHIHFI…LPLAQLYHLF (440 aa). Ni(2+) contacts are provided by H133, H135, and K216. Position 216 is an N6-carboxylysine (K216). Residue H218 participates in substrate binding. Positions 245 and 271 each coordinate Ni(2+). H319 acts as the Proton donor in catalysis. D359 contacts Ni(2+).

Belongs to the metallo-dependent hydrolases superfamily. Urease alpha subunit family. In terms of assembly, heterotrimer of UreA (gamma), UreB (beta) and UreC (alpha) subunits. Three heterotrimers associate to form the active enzyme. It depends on Ni cation as a cofactor. Carboxylation allows a single lysine to coordinate two nickel ions.

It localises to the cytoplasm. It catalyses the reaction urea + 2 H2O + H(+) = hydrogencarbonate + 2 NH4(+). It functions in the pathway nitrogen metabolism; urea degradation; CO(2) and NH(3) from urea (urease route): step 1/1. The polypeptide is Urease subunit alpha (Marinobacter nauticus (strain ATCC 700491 / DSM 11845 / VT8) (Marinobacter aquaeolei)).